The following is a 496-amino-acid chain: Amino-acid acetyltransferase, mitochondrial (496 aa).

Residues 333–493 (YHGTDCLTNG…LDVIDSIQPT (161 aa)) form the N-acetyltransferase domain.

The protein belongs to the acetyltransferase family.

Its subcellular location is the mitochondrion. The catalysed reaction is L-glutamate + acetyl-CoA = N-acetyl-L-glutamate + CoA + H(+). The protein operates within amino-acid biosynthesis; L-arginine biosynthesis; N(2)-acetyl-L-ornithine from L-glutamate: step 1/4. In terms of biological role, N-acetylglutamate synthase involved in arginine biosynthesis. This chain is Amino-acid acetyltransferase, mitochondrial (arg2), found in Schizosaccharomyces japonicus (strain yFS275 / FY16936) (Fission yeast).